A 59-amino-acid polypeptide reads, in one-letter code: MLDIKLLDIIACPLCKGKLSYKKNSNELICKFDHLAYPVIDGIPALLKVKARTISSDEE.

It belongs to the UPF0434 family.

In Psychromonas ingrahamii (strain DSM 17664 / CCUG 51855 / 37), this protein is UPF0434 protein Ping_0902.